Consider the following 138-residue polypeptide: Augmin complex subunit msd1 (138 aa).

Component of the augmin complex composed of dgt2, dgt3, dgt4, dgt5, dgt6, msd1, msd5 and wac. The complex interacts directly or indirectly with microtubules and is required for centrosome-independent generation of spindle microtubules.

The protein localises to the cytoplasm. It is found in the cytoskeleton. Its subcellular location is the spindle. Its function is as follows. As part of the augmin complex, plays a role in centrosome-independent generation of spindle microtubules. The complex is required for mitotic spindle assembly through its involvement in localizing gamma-tubulin to spindle microtubules. msd1 is required for microtubule nucleation from within the mitotic spindle and for localization of Grip71 to centrosomes and mitotic spindle. This is Augmin complex subunit msd1 from Drosophila melanogaster (Fruit fly).